The sequence spans 1396 residues: Integrin alpha-PS2 (1396 aa).

The signal sequence occupies residues 1 to 31; sequence MSGDSIHRRRMALHCPITSLILLLIAMSAHG. Over 32-1341 the chain is Extracellular; sequence YNIDLPSYVR…EPEPLQVPDV (1310 aa). 7 FG-GAP repeats span residues 36-106, 117-174, 186-239, 266-317, 318-383, 386-445, and 452-514; these read LPSY…DCKL, NVDK…FTSH, RTNN…FPFK, STSE…RWNM, ANIF…TEEK, TTEH…GPLA, and KSEQ…FASN. An N-linked (GlcNAc...) asparagine glycan is attached at Asn69. An N-linked (GlcNAc...) asparagine glycan is attached at Asn209. Asn322 carries N-linked (GlcNAc...) asparagine glycosylation. 6 N-linked (GlcNAc...) asparagine glycosylation sites follow: Asn584, Asn598, Asn741, Asn783, Asn833, and Asn959. Disordered stretches follow at residues 960 to 1107 and 1159 to 1246; these read STDA…LGTL and PGFQ…KPLQ. The span at 963–979 shows a compositional bias: basic and acidic residues; it reads AGDKLSPKQVEQRRQED. The segment covering 997-1006 has biased composition (polar residues); that stretch reads QAVQEPQVNQ. Asn1005 carries N-linked (GlcNAc...) asparagine glycosylation. 2 stretches are compositionally biased toward low complexity: residues 1007 to 1021 and 1060 to 1071; these read TSFT…SSGS and QQQQQHQQLLLA. The span at 1082–1099 shows a compositional bias: polar residues; the sequence is VTFNDKSQFGGRNNNFHT. Composition is skewed to low complexity over residues 1162–1182 and 1217–1226; these read QGQT…GYQT and SSSSSSSSSS. 2 N-linked (GlcNAc...) asparagine glycosylation sites follow: Asn1299 and Asn1307. A helical transmembrane segment spans residues 1342-1366; that stretch reads VPLWVVVLAACAGALIFLLLVWLLY. At 1367–1396 the chain is on the cytoplasmic side; it reads KCGFFNRNRPTDHSQERQPLRNGYHGDEHL. Residues 1377 to 1396 are disordered; sequence TDHSQERQPLRNGYHGDEHL.

The protein belongs to the integrin alpha chain family. As to quaternary structure, heterodimer of an alpha and a beta subunit. The alpha subunit is composed of a heavy and a light chain linked by a disulfide bond. Alpha-PS2 associates with beta-PS. Post-translationally, the heavy-light chain cleavage site is either in 1230-1231, or 1233-1234, or 1243-1244. In terms of tissue distribution, in ovaries, highly expressed in follicle cells. At syncytial blastoderm stage, expressed in the embryonic mesodermal precursors but not in the ectoderm. At embryonic stages 7 and 10, expression is restricted to the mesoderm. At stage 12, expressed in the gonadal sheath and the interstitial cells of the gonad. In stage 16 embryos, expressed in the somatic and visceral muscles where localizes to sites of attachment between adjacent muscles. In third larval instar wing imaginal disk, expressed in the ventral compartment and in a subset of adepithelial and peripodial cells (at protein level).

The protein localises to the apical cell membrane. It is found in the lateral cell membrane. The protein resides in the basal cell membrane. Its function is as follows. Alpha-PS2/beta-PS is a receptor for Tig, wb and Ten-m. Involved in the function and/or development of the olfactory system. The polypeptide is Integrin alpha-PS2 (if) (Drosophila melanogaster (Fruit fly)).